The sequence spans 472 residues: 3-isopropylmalate dehydratase large subunit (472 aa).

3 residues coordinate [4Fe-4S] cluster: Cys351, Cys412, and Cys415.

This sequence belongs to the aconitase/IPM isomerase family. LeuC type 1 subfamily. In terms of assembly, heterodimer of LeuC and LeuD. It depends on [4Fe-4S] cluster as a cofactor.

It catalyses the reaction (2R,3S)-3-isopropylmalate = (2S)-2-isopropylmalate. Its pathway is amino-acid biosynthesis; L-leucine biosynthesis; L-leucine from 3-methyl-2-oxobutanoate: step 2/4. Its function is as follows. Catalyzes the isomerization between 2-isopropylmalate and 3-isopropylmalate, via the formation of 2-isopropylmaleate. The protein is 3-isopropylmalate dehydratase large subunit of Marinobacter nauticus (strain ATCC 700491 / DSM 11845 / VT8) (Marinobacter aquaeolei).